The sequence spans 165 residues: Crossover junction endodeoxyribonuclease RuvC (165 aa).

Active-site residues include D7, E67, and D140. 3 residues coordinate Mg(2+): D7, E67, and D140.

This sequence belongs to the RuvC family. Homodimer which binds Holliday junction (HJ) DNA. The HJ becomes 2-fold symmetrical on binding to RuvC with unstacked arms; it has a different conformation from HJ DNA in complex with RuvA. In the full resolvosome a probable DNA-RuvA(4)-RuvB(12)-RuvC(2) complex forms which resolves the HJ. The cofactor is Mg(2+).

The protein resides in the cytoplasm. The enzyme catalyses Endonucleolytic cleavage at a junction such as a reciprocal single-stranded crossover between two homologous DNA duplexes (Holliday junction).. The RuvA-RuvB-RuvC complex processes Holliday junction (HJ) DNA during genetic recombination and DNA repair. Endonuclease that resolves HJ intermediates. Cleaves cruciform DNA by making single-stranded nicks across the HJ at symmetrical positions within the homologous arms, yielding a 5'-phosphate and a 3'-hydroxyl group; requires a central core of homology in the junction. The consensus cleavage sequence is 5'-(A/T)TT(C/G)-3'. Cleavage occurs on the 3'-side of the TT dinucleotide at the point of strand exchange. HJ branch migration catalyzed by RuvA-RuvB allows RuvC to scan DNA until it finds its consensus sequence, where it cleaves and resolves the cruciform DNA. The protein is Crossover junction endodeoxyribonuclease RuvC of Dehalococcoides mccartyi (strain ATCC BAA-2266 / KCTC 15142 / 195) (Dehalococcoides ethenogenes (strain 195)).